Reading from the N-terminus, the 131-residue chain is Large ribosomal subunit protein bL17 (131 aa).

This sequence belongs to the bacterial ribosomal protein bL17 family. As to quaternary structure, part of the 50S ribosomal subunit. Contacts protein L32.

The chain is Large ribosomal subunit protein bL17 from Cupriavidus metallidurans (strain ATCC 43123 / DSM 2839 / NBRC 102507 / CH34) (Ralstonia metallidurans).